The following is a 444-amino-acid chain: Squalene synthase ERG9 (444 aa).

A helical transmembrane segment spans residues 421–441; the sequence is FNMVLSIILSVLLGFYYIYTL.

This sequence belongs to the phytoene/squalene synthase family. It depends on Mg(2+) as a cofactor.

The protein localises to the endoplasmic reticulum membrane. It localises to the microsome. It carries out the reaction 2 (2E,6E)-farnesyl diphosphate + NADPH + H(+) = squalene + 2 diphosphate + NADP(+). It catalyses the reaction 2 (2E,6E)-farnesyl diphosphate + NADH + H(+) = squalene + 2 diphosphate + NAD(+). Its pathway is terpene metabolism; lanosterol biosynthesis; lanosterol from farnesyl diphosphate: step 1/3. In terms of biological role, squalene synthase; part of the third module of ergosterol biosynthesis pathway that includes the late steps of the pathway. ERG9 produces squalene from 2 farnesyl pyrophosphate moieties. The third module or late pathway involves the ergosterol synthesis itself through consecutive reactions that mainly occur in the endoplasmic reticulum (ER) membrane. Firstly, the squalene synthase ERG9 catalyzes the condensation of 2 farnesyl pyrophosphate moieties to form squalene, which is the precursor of all steroids. Squalene synthase is crucial for balancing the incorporation of farnesyl diphosphate (FPP) into sterol and nonsterol isoprene synthesis. Secondly, the squalene epoxidase ERG1 catalyzes the stereospecific oxidation of squalene to (S)-2,3-epoxysqualene, which is considered to be a rate-limiting enzyme in steroid biosynthesis. Then, the lanosterol synthase ERG7 catalyzes the cyclization of (S)-2,3 oxidosqualene to lanosterol, a reaction that forms the sterol core. In the next steps, lanosterol is transformed to zymosterol through a complex process involving various demethylation, reduction and desaturation reactions. The lanosterol 14-alpha-demethylase ERG11 (also known as CYP51) catalyzes C14-demethylation of lanosterol to produce 4,4'-dimethyl cholesta-8,14,24-triene-3-beta-ol, which is critical for ergosterol biosynthesis. The C-14 reductase ERG24 reduces the C14=C15 double bond of 4,4-dimethyl-cholesta-8,14,24-trienol to produce 4,4-dimethyl-cholesta-8,24-dienol. 4,4-dimethyl-cholesta-8,24-dienol is substrate of the C-4 demethylation complex ERG25-ERG26-ERG27 in which ERG25 catalyzes the three-step monooxygenation required for the demethylation of 4,4-dimethyl and 4alpha-methylsterols, ERG26 catalyzes the oxidative decarboxylation that results in a reduction of the 3-beta-hydroxy group at the C-3 carbon to an oxo group, and ERG27 is responsible for the reduction of the keto group on the C-3. ERG28 has a role as a scaffold to help anchor ERG25, ERG26 and ERG27 to the endoplasmic reticulum and ERG29 regulates the activity of the iron-containing C4-methylsterol oxidase ERG25. Then, the sterol 24-C-methyltransferase ERG6 catalyzes the methyl transfer from S-adenosyl-methionine to the C-24 of zymosterol to form fecosterol. The C-8 sterol isomerase ERG2 catalyzes the reaction which results in unsaturation at C-7 in the B ring of sterols and thus converts fecosterol to episterol. The sterol-C5-desaturase ERG3 then catalyzes the introduction of a C-5 double bond in the B ring to produce 5-dehydroepisterol. The C-22 sterol desaturase ERG5 further converts 5-dehydroepisterol into ergosta-5,7,22,24(28)-tetraen-3beta-ol by forming the C-22(23) double bond in the sterol side chain. Finally, ergosta-5,7,22,24(28)-tetraen-3beta-ol is substrate of the C-24(28) sterol reductase ERG4 to produce ergosterol. The polypeptide is Squalene synthase ERG9 (Saccharomyces cerevisiae (strain ATCC 204508 / S288c) (Baker's yeast)).